The sequence spans 433 residues: Probable oxaloacetate decarboxylase beta chain (433 aa).

The next 9 membrane-spanning stretches (helical) occupy residues 13-35 (LFHL…YLAI), 125-147 (YLFY…GVGA), 162-184 (LLGA…LSSL), 189-211 (FSVA…AIYV), 215-237 (LAPE…VPMI), 267-289 (IGFP…PLLG), 309-328 (TAQN…SVGS), 340-362 (TIGI…VLMA), and 404-426 (FLLM…AAGV).

It belongs to the GcdB/MmdB/OadB family. In terms of assembly, heterotrimer of an alpha, a beta and a gamma subunit. It depends on Na(+) as a cofactor.

It localises to the cell membrane. The enzyme catalyses oxaloacetate + 2 Na(+)(in) + H(+) = pyruvate + 2 Na(+)(out) + CO2. Functionally, catalyzes the decarboxylation of oxaloacetate coupled to Na(+) translocation. This Vibrio cholerae serotype O1 (strain ATCC 39315 / El Tor Inaba N16961) protein is Probable oxaloacetate decarboxylase beta chain (oadB).